The chain runs to 61 residues: Small ribosomal subunit protein uS14 (61 aa).

4 residues coordinate Zn(2+): cysteine 24, cysteine 27, cysteine 40, and cysteine 43.

The protein belongs to the universal ribosomal protein uS14 family. Zinc-binding uS14 subfamily. In terms of assembly, part of the 30S ribosomal subunit. Contacts proteins S3 and S10. Requires Zn(2+) as cofactor.

Its function is as follows. Binds 16S rRNA, required for the assembly of 30S particles and may also be responsible for determining the conformation of the 16S rRNA at the A site. The polypeptide is Small ribosomal subunit protein uS14 (Leptospira biflexa serovar Patoc (strain Patoc 1 / Ames)).